The chain runs to 199 residues: Recombination protein RecR (199 aa).

Residues 56–71 (CRSCFNVAQSELCRIC) form a C4-type zinc finger. The Toprim domain occupies 79-174 (SSICVVEEPK…KVTRLASGLP (96 aa)).

The protein belongs to the RecR family.

Functionally, may play a role in DNA repair. It seems to be involved in an RecBC-independent recombinational process of DNA repair. It may act with RecF and RecO. The polypeptide is Recombination protein RecR (Frankia casuarinae (strain DSM 45818 / CECT 9043 / HFP020203 / CcI3)).